The chain runs to 239 residues: 7-cyano-7-deazaguanine synthase (239 aa).

13-23 (LSGGQDSATCL) contacts ATP. Zn(2+)-binding residues include C199, C214, C217, and C220.

It belongs to the QueC family. The cofactor is Zn(2+).

It catalyses the reaction 7-carboxy-7-deazaguanine + NH4(+) + ATP = 7-cyano-7-deazaguanine + ADP + phosphate + H2O + H(+). Its pathway is purine metabolism; 7-cyano-7-deazaguanine biosynthesis. Its function is as follows. Catalyzes the ATP-dependent conversion of 7-carboxy-7-deazaguanine (CDG) to 7-cyano-7-deazaguanine (preQ(0)). This chain is 7-cyano-7-deazaguanine synthase, found in Acidovorax ebreus (strain TPSY) (Diaphorobacter sp. (strain TPSY)).